The primary structure comprises 227 residues: UPF0173 metal-dependent hydrolase BC_4613 (227 aa).

This sequence belongs to the UPF0173 family.

This chain is UPF0173 metal-dependent hydrolase BC_4613, found in Bacillus cereus (strain ATCC 14579 / DSM 31 / CCUG 7414 / JCM 2152 / NBRC 15305 / NCIMB 9373 / NCTC 2599 / NRRL B-3711).